A 492-amino-acid chain; its full sequence is Cytochrome P450 26A1 (492 aa).

Cys-437 is a heme binding site.

This sequence belongs to the cytochrome P450 family. Heme serves as cofactor.

It localises to the endoplasmic reticulum membrane. The protein localises to the microsome membrane. It carries out the reaction all-trans-retinoate + reduced [NADPH--hemoprotein reductase] + O2 = all-trans-(4S)-hydroxyretinoate + oxidized [NADPH--hemoprotein reductase] + H2O + H(+). The catalysed reaction is all-trans-(4S)-hydroxyretinoate + reduced [NADPH--hemoprotein reductase] + O2 = all-trans-(4S,16)-dihydroxyretinoate + oxidized [NADPH--hemoprotein reductase] + H2O + H(+). The enzyme catalyses all-trans-retinoate + reduced [NADPH--hemoprotein reductase] + O2 = all-trans-18-hydroxyretinoate + oxidized [NADPH--hemoprotein reductase] + H2O + H(+). Functionally, a cytochrome P450 monooxygenase involved in the metabolism of retinoates (RAs), the active metabolites of vitamin A, and critical signaling molecules in animals. RAs exist as at least four different isomers: all-trans-RA (atRA), 9-cis-RA, 13-cis-RA, and 9,13-dicis-RA, where atRA is considered to be the biologically active isomer, although 9-cis-RA and 13-cis-RA also have activity. Catalyzes the hydroxylation of atRA primarily at C-4 and C-18, thereby contributing to the regulation of atRA homeostasis and signaling. Hydroxylation of atRA limits its biological activity and initiates a degradative process leading to its eventual elimination. Involved in the convertion of atRA to all-trans-4-oxo-RA. Able to metabolize other RAs such as 9-cis, 13-cis and 9,13-di-cis RA. Can oxidize all-trans-13,14-dihydroretinoate (DRA) to metabolites which could include all-trans-4-oxo-DRA, all-trans-4-hydroxy-DRA, all-trans-5,8-epoxy-DRA, and all-trans-18-hydroxy-DRA. May play a role in the oxidative metabolism of xenobiotics such as tazarotenic acid. The chain is Cytochrome P450 26A1 (CYP26A1) from Gallus gallus (Chicken).